Reading from the N-terminus, the 896-residue chain is Phosphatidate phosphatase LPIN2 (896 aa).

Residues 1–108 are N-LIP; it reads MNYVGQLAGQ…LPAYLATSPI (108 aa). A Phosphoserine modification is found at S106. The tract at residues 120 to 208 is disordered; the sequence is TPLVKSGGDE…SSNASLKEEE (89 aa). Basic residues predominate over residues 152-162; that stretch reads VKKKKRRRKKY. Residues 153-158 carry the Nuclear localization signal motif; it reads KKKKRR. A phosphoserine mark is found at S174, S186, S187, S243, and S303. Disordered regions lie at residues 370 to 405 and 420 to 459; these read AEAP…DIYL and FPKS…TECL. The segment covering 387 to 396 has biased composition (basic residues); sequence KKKGVHKRSQ. Positions 426 to 448 are enriched in polar residues; sequence EPGSRQWPESDTLSGSQSPQSVG. S566 carries the post-translational modification Phosphoserine. Residues 569-579 are compositionally biased toward basic and acidic residues; sequence KQLPESKEGKS. The tract at residues 569-636 is disordered; that stretch reads KQLPESKEGK…LSHGSTTSYK (68 aa). The span at 604-617 shows a compositional bias: acidic residues; the sequence is SSSDEGSQELEESI. The interval 635-837 is C-LIP; the sequence is YKKSLRLSSD…RIFTVNPKGE (203 aa). Residues 689-693 carry the DXDXT motif motif; sequence DIDGT. The LXXIL motif signature appears at 700–704; the sequence is LGQIL.

This sequence belongs to the lipin family. It depends on Mg(2+) as a cofactor. As to expression, expressed in liver, lung, kidney, placenta, spleen, thymus, lymph node, prostate, testes, small intestine, and colon.

The protein localises to the nucleus. It is found in the cytoplasm. Its subcellular location is the cytosol. It localises to the endoplasmic reticulum membrane. The enzyme catalyses a 1,2-diacyl-sn-glycero-3-phosphate + H2O = a 1,2-diacyl-sn-glycerol + phosphate. Inhibited by N-ethylmaleimide. Its function is as follows. Acts as a magnesium-dependent phosphatidate phosphatase enzyme which catalyzes the conversion of phosphatidic acid to diacylglycerol during triglyceride, phosphatidylcholine and phosphatidylethanolamine biosynthesis in the endoplasmic reticulum membrane. Plays important roles in controlling the metabolism of fatty acids at different levels. Also acts as a nuclear transcriptional coactivator for PPARGC1A to modulate lipid metabolism. The protein is Phosphatidate phosphatase LPIN2 of Homo sapiens (Human).